The chain runs to 441 residues: Tubulin alpha chain (441 aa).

8 residues coordinate GTP: Q11, E68, S137, G141, T142, T176, N203, and N224. A Mg(2+)-binding site is contributed by E68. E250 is an active-site residue.

It belongs to the tubulin family. Dimer of alpha and beta chains. A typical microtubule is a hollow water-filled tube with an outer diameter of 25 nm and an inner diameter of 15 nM. Alpha-beta heterodimers associate head-to-tail to form protofilaments running lengthwise along the microtubule wall with the beta-tubulin subunit facing the microtubule plus end conferring a structural polarity. Microtubules usually have 13 protofilaments but different protofilament numbers can be found in some organisms and specialized cells. Mg(2+) is required as a cofactor.

It is found in the cytoplasm. It localises to the cytoskeleton. The catalysed reaction is GTP + H2O = GDP + phosphate + H(+). Functionally, tubulin is the major constituent of microtubules, a cylinder consisting of laterally associated linear protofilaments composed of alpha- and beta-tubulin heterodimers. Microtubules grow by the addition of GTP-tubulin dimers to the microtubule end, where a stabilizing cap forms. Below the cap, tubulin dimers are in GDP-bound state, owing to GTPase activity of alpha-tubulin. This is Tubulin alpha chain (TUB1) from Encephalitozoon cuniculi (strain GB-M1) (Microsporidian parasite).